The sequence spans 157 residues: Small ribosomal subunit protein uS7 (157 aa).

This sequence belongs to the universal ribosomal protein uS7 family. Part of the 30S ribosomal subunit. Contacts proteins S9 and S11.

Functionally, one of the primary rRNA binding proteins, it binds directly to 16S rRNA where it nucleates assembly of the head domain of the 30S subunit. Is located at the subunit interface close to the decoding center, probably blocks exit of the E-site tRNA. The sequence is that of Small ribosomal subunit protein uS7 from Verminephrobacter eiseniae (strain EF01-2).